The primary structure comprises 547 residues: Chaperonin GroEL (547 aa).

ATP contacts are provided by residues Thr30–Pro33, Lys51, Asp87–Thr91, Gly415, and Asp496.

Belongs to the chaperonin (HSP60) family. As to quaternary structure, forms a cylinder of 14 subunits composed of two heptameric rings stacked back-to-back. Interacts with the co-chaperonin GroES.

It is found in the cytoplasm. The catalysed reaction is ATP + H2O + a folded polypeptide = ADP + phosphate + an unfolded polypeptide.. Functionally, together with its co-chaperonin GroES, plays an essential role in assisting protein folding. The GroEL-GroES system forms a nano-cage that allows encapsulation of the non-native substrate proteins and provides a physical environment optimized to promote and accelerate protein folding. The chain is Chaperonin GroEL from Actinobacillus pleuropneumoniae (Haemophilus pleuropneumoniae).